Reading from the N-terminus, the 773-residue chain is Polymeric immunoglobulin receptor (773 aa).

An N-terminal signal peptide occupies residues 1-18 (MALFLLTCLLAVFSAATA). The Extracellular portion of the chain corresponds to 19-647 (QSSLLGPSSI…SASGQSGSAK (629 aa)). Residues 25-131 (PSSIFGPGEV…RGLDFGVNVL (107 aa)) enclose the Ig-like V-type 1; required for binding to polymeric IgA and IgM domain. 5 cysteine pairs are disulfide-bonded: C46/C115, C155/C225, C260/C324, C369/C438, and C478/C538. Residue K88 is glycosylated (N-linked (GlcNAc...) asparagine; in variant N-88). N108 carries an N-linked (GlcNAc...) asparagine glycan. 4 consecutive Ig-like V-type domains span residues 138–232 (PDDV…SDPT), 233–340 (AEEQ…TQLR), 352–455 (RSPP…LQIV), and 461–557 (PTID…VELT). N-linked (GlcNAc...) asparagine glycosylation occurs at N418. The disordered stretch occupies residues 619 to 641 (AVQSAEDPASGSRASVDASSASG). The segment covering 632-641 (ASVDASSASG) has biased composition (low complexity). The helical transmembrane segment at 648–670 (VLISTLVPLGLVLAAGAMAVAIA) threads the bilayer. The Cytoplasmic portion of the chain corresponds to 671 to 773 (RARHRRNVDR…AEHQDGPKEA (103 aa)). Residues S682, S691, S698, and S744 each carry the phosphoserine modification. Positions 725–746 (ATATESTVEIEEPKKAKRSSKE) are disordered. A compositionally biased stretch (basic and acidic residues) spans 735–746 (EEPKKAKRSSKE).

Interacts (mainly via CDR1-like domain) with dimeric IgA. Interacts (mainly via CDR2-like domain) with pentameric IgM. In terms of assembly, either free or part of the secretory IgA (sIgA) complex that consists of two, four or five IgA monomers, and two additional non-Ig polypeptides, namely the JCHAIN and the secretory component (the proteolytic product of PIGR). Free secretory component interacts with bacterial antigens toxA of C.difficile and eae of E.coli. In terms of processing, N-glycosylated. N-glycosylation is required for anchoring IgA molecules to mucus, but is not necessary for Ig binding.

Its subcellular location is the cell membrane. It localises to the secreted. Mediates selective transcytosis of polymeric IgA and IgM across mucosal epithelial cells. Binds polymeric IgA and IgM at the basolateral surface of epithelial cells. The complex is then transported across the cell to be secreted at the apical surface. During this process, a cleavage occurs that separates the extracellular (known as the secretory component) from the transmembrane segment. In terms of biological role, through its N-linked glycans ensures anchoring of secretory IgA (sIgA) molecules to mucus lining the epithelial surface to neutralize extracellular pathogens. On its own (free form) may act as a non-specific microbial scavenger to prevent pathogen interaction with epithelial cells. The protein is Polymeric immunoglobulin receptor (PIGR) of Oryctolagus cuniculus (Rabbit).